Reading from the N-terminus, the 502-residue chain is tRNA-2-methylthio-N(6)-dimethylallyladenosine synthase (502 aa).

The MTTase N-terminal domain maps to 12-129; that stretch reads RTYQVRTYGC…LPVLLERARH (118 aa). [4Fe-4S] cluster-binding residues include Cys21, Cys58, Cys92, Cys166, Cys170, and Cys173. The 232-residue stretch at 152–383 folds into the Radical SAM core domain; it reads RESTYAGWVS…ACVEEITWAE (232 aa). The 71-residue stretch at 385–455 folds into the TRAM domain; that stretch reads RRLVGETVEV…PHHLNADGEP (71 aa). The tract at residues 451–502 is disordered; the sequence is ADGEPLAHRRTPAGDAAEAGRRPRTAGVSLGLPTVGAPPSPVPPAASSACAC.

It belongs to the methylthiotransferase family. MiaB subfamily. In terms of assembly, monomer. Requires [4Fe-4S] cluster as cofactor.

The protein resides in the cytoplasm. It carries out the reaction N(6)-dimethylallyladenosine(37) in tRNA + (sulfur carrier)-SH + AH2 + 2 S-adenosyl-L-methionine = 2-methylsulfanyl-N(6)-dimethylallyladenosine(37) in tRNA + (sulfur carrier)-H + 5'-deoxyadenosine + L-methionine + A + S-adenosyl-L-homocysteine + 2 H(+). Catalyzes the methylthiolation of N6-(dimethylallyl)adenosine (i(6)A), leading to the formation of 2-methylthio-N6-(dimethylallyl)adenosine (ms(2)i(6)A) at position 37 in tRNAs that read codons beginning with uridine. This chain is tRNA-2-methylthio-N(6)-dimethylallyladenosine synthase, found in Salinispora arenicola (strain CNS-205).